A 61-amino-acid chain; its full sequence is MACCRCDSSPGDYSGALLILFISFVFFYITSLSPQGNTYVHHFDSSSVKTQYVGISTNGDG.

Residues 1-12 are Cytoplasmic-facing; it reads MACCRCDSSPGD. The chain crosses the membrane as a helical; Signal-anchor for type II membrane protein span at residues 13 to 33; it reads YSGALLILFISFVFFYITSLS. Over 34-61 the chain is Lumenal; it reads PQGNTYVHHFDSSSVKTQYVGISTNGDG.

It belongs to the gammacarmovirus double gene block protein 2 family.

The protein localises to the host endoplasmic reticulum membrane. Cell-to-cell movement function. In Melon necrotic spot virus (MNSV), this protein is Double gene block protein 2.